The following is a 110-amino-acid chain: Large ribosomal subunit protein uL22 (110 aa).

It belongs to the universal ribosomal protein uL22 family. Part of the 50S ribosomal subunit.

Functionally, this protein binds specifically to 23S rRNA; its binding is stimulated by other ribosomal proteins, e.g. L4, L17, and L20. It is important during the early stages of 50S assembly. It makes multiple contacts with different domains of the 23S rRNA in the assembled 50S subunit and ribosome. In terms of biological role, the globular domain of the protein is located near the polypeptide exit tunnel on the outside of the subunit, while an extended beta-hairpin is found that lines the wall of the exit tunnel in the center of the 70S ribosome. This chain is Large ribosomal subunit protein uL22, found in Vibrio parahaemolyticus serotype O3:K6 (strain RIMD 2210633).